Consider the following 470-residue polypeptide: Acetyl-CoA decarbonylase/synthase complex subunit gamma 2 (470 aa).

In terms of domain architecture, 4Fe-4S spans 1–60 (MKINSPLEAYKYLPQTNCGECGQPTCMAFASTLIDRSGKTTDCPPLIKEKKFAKKLAELD). [4Fe-4S] cluster is bound by residues cysteine 18, cysteine 21, cysteine 26, and cysteine 43.

As to quaternary structure, heterodimer of delta and gamma chains. The ACDS complex is made up of alpha, epsilon, beta, gamma and delta chains with a probable stoichiometry of (alpha(2)epsilon(2))(4)-beta(8)-(gamma(1)delta(1))(8). Corrinoid is required as a cofactor. [4Fe-4S] cluster serves as cofactor.

It carries out the reaction 5,6,7,8-tetrahydrosarcinapterin + methyl-Co(III)-[corrinoid Fe-S protein] = 5-methyltetrahydrosarcinapterin + Co(I)-[corrinoid Fe-S protein] + H(+). Its pathway is one-carbon metabolism; methanogenesis from acetate. In terms of biological role, part of a complex that catalyzes the reversible cleavage of acetyl-CoA, allowing growth on acetate as sole source of carbon and energy. The polypeptide is Acetyl-CoA decarbonylase/synthase complex subunit gamma 2 (Methanosarcina mazei (strain ATCC BAA-159 / DSM 3647 / Goe1 / Go1 / JCM 11833 / OCM 88) (Methanosarcina frisia)).